The following is a 222-amino-acid chain: ATP-dependent dethiobiotin synthetase BioD (222 aa).

12 to 17 (DVGKTI) serves as a coordination point for ATP. Position 16 (Thr-16) interacts with Mg(2+). The active site involves Lys-37. A substrate-binding site is contributed by Thr-41. Residues Asp-49, 107-110 (EGAG), 167-168 (GS), and 197-199 (AEG) contribute to the ATP site. Residues Asp-49 and Glu-107 each coordinate Mg(2+).

The protein belongs to the dethiobiotin synthetase family. In terms of assembly, homodimer. The cofactor is Mg(2+).

It is found in the cytoplasm. The enzyme catalyses (7R,8S)-7,8-diammoniononanoate + CO2 + ATP = (4R,5S)-dethiobiotin + ADP + phosphate + 3 H(+). It participates in cofactor biosynthesis; biotin biosynthesis; biotin from 7,8-diaminononanoate: step 1/2. Functionally, catalyzes a mechanistically unusual reaction, the ATP-dependent insertion of CO2 between the N7 and N8 nitrogen atoms of 7,8-diaminopelargonic acid (DAPA, also called 7,8-diammoniononanoate) to form a ureido ring. This chain is ATP-dependent dethiobiotin synthetase BioD, found in Corynebacterium diphtheriae (strain ATCC 700971 / NCTC 13129 / Biotype gravis).